An 83-amino-acid chain; its full sequence is Kappa-actitoxin-Aer3a (83 aa).

Residues 1 to 22 (MKGQMIICLVLIALCMSVVVMA) form the signal peptide. A propeptide spanning residues 23–49 (QNLRAEELEKANPKDERVRSFERNQKR) is cleaved from the precursor. A ShKT domain is found at 51–83 (CKDYLPKSECTQFRCRTSMKYKYTNCKKTCGTC). 3 cysteine pairs are disulfide-bonded: cysteine 51/cysteine 83, cysteine 60/cysteine 76, and cysteine 65/cysteine 80.

This sequence belongs to the sea anemone type 1 potassium channel toxin family. Type 1a subfamily.

It localises to the secreted. Its subcellular location is the nematocyst. Specifically, dose-dependently and potently blocks the voltage-gated potassium channel Kv1.1/KCNA1 (Ki=1.6 pM). Moderately blocks potassium channel heterotetramers formed by 3 subunits of Kv1.1/KCNA1 and 1 subunit of Kv1.2/KCNA2 (Ki=56 nM) and weakly blocks those formed by 2 subunits of Kv1.1/KCNA1 and 2 subunits of Kv1.2/KCNA2 (Ki=14 nM). The polypeptide is Kappa-actitoxin-Aer3a (Anemonia erythraea (Sea anemone)).